We begin with the raw amino-acid sequence, 196 residues long: DnaA initiator-associating protein DiaA (196 aa).

The SIS domain occupies 34–196 (LVQSLLNGNK…DNTLFPHQND (163 aa)).

The protein belongs to the SIS family. DiaA subfamily. As to quaternary structure, homotetramer; dimer of dimers.

In terms of biological role, required for the timely initiation of chromosomal replication via direct interactions with the DnaA initiator protein. This chain is DnaA initiator-associating protein DiaA, found in Yersinia pestis bv. Antiqua (strain Antiqua).